The sequence spans 235 residues: Cytochrome c-554 (235 aa).

Residues 1-24 (MKIMIACGLVAAALFTLTSGQSLA) form the signal peptide. 15 residues coordinate heme: Cys35, Cys38, His39, His51, Cys84, Cys87, His88, Cys112, Cys115, His116, His126, Cys158, Cys161, His162, and His203. The interval 121–144 (NFRGDHRKSGQAFEKSGKKTPRKD) is disordered.

In terms of processing, binds 4 heme groups per subunit.

The protein resides in the periplasm. Functionally, involved in ammonia oxidation; accepts electrons directly from hydroxylamine oxidoreductase (HAO). The polypeptide is Cytochrome c-554 (cycA1) (Nitrosomonas europaea (strain ATCC 19718 / CIP 103999 / KCTC 2705 / NBRC 14298)).